The following is a 125-amino-acid chain: MKKEHASAFRQLWRAGMAAAISTRFPGHRFVIRDLLRNGFRQNNCSFYSKEKVENTVIFLEMAASRKSVEHLILKNRLHIQMFRRKAGQRLAHYSTAKERPYFLSAYDTYEWCLQRVGTIYNLYL.

The protein belongs to the UPF0593 family.

It localises to the mitochondrion. In Schizosaccharomyces pombe (strain 972 / ATCC 24843) (Fission yeast), this protein is UPF0593 mitochondrial protein C806.05.